The chain runs to 484 residues: Protein LAZ1 homolog 1 (484 aa).

The N-terminal stretch at 1–19 (MEWRGILCSLLFIVSVGES) is a signal peptide. 6 helical membrane-spanning segments follow: residues 42-62 (PILS…YLIF), 76-96 (FLIG…LSLV), 190-210 (MILK…GVYG), 219-239 (GYPY…YCLV), 264-284 (IVFL…MGLV), and 299-319 (YIIC…FPAA). The disordered stretch occupies residues 344–364 (PDPEEVKDSERTTRTRYGRHD). Over residues 347–364 (EEVKDSERTTRTRYGRHD) the composition is skewed to basic and acidic residues. A coiled-coil region spans residues 406–428 (IAKINRTFHQISENVKRFEQQKK). Positions 459–484 (VSDSGLGSTNRHHQSRVSGLWTRMRR) are disordered.

This sequence belongs to the TMEM184 family.

It localises to the membrane. The protein is Protein LAZ1 homolog 1 of Arabidopsis thaliana (Mouse-ear cress).